The following is a 57-amino-acid chain: Potassium channel toxin alpha-KTx 26.3 (57 aa).

The signal sequence occupies residues 1–15; that stretch reads MSGLSVFILIALVLS. Residues 16–24 constitute a propeptide that is removed on maturation; it reads VIIDVLNNS. 3 cysteine pairs are disulfide-bonded: C30/C48, C34/C53, and C38/C55.

It belongs to the short scorpion toxin superfamily. Potassium channel inhibitor family. Alpha-KTx 26 subfamily. In terms of tissue distribution, expressed by the venom gland.

It localises to the secreted. In terms of biological role, recombinant toxin that reversibly inhibits the potassium current of mKv1.3/KCNA3 channel stably expressed in COS7 cells (IC(50)=150 nM). The polypeptide is Potassium channel toxin alpha-KTx 26.3 (Mesobuthus gibbosus (Mediterranean checkered scorpion)).